A 168-amino-acid polypeptide reads, in one-letter code: Iron-sulfur cluster assembly enzyme ISCU (168 aa).

The transit peptide at 1–35 directs the protein to the mitochondrion; sequence MAAATGAGRLRRAASALLLRSPRLPARELSAPARL. S15 carries the phosphoserine modification. The active-site Cysteine persulfide intermediate is C70. C70 carries the post-translational modification Cysteine persulfide. Zn(2+) contacts are provided by D72, C96, and C139. The Cysteine persulfide intermediate role is filled by C139. C139 is subject to Cysteine persulfide.

It belongs to the NifU family. Homodimer; Tyr-36-mediated dimerization of two iron- and sulfide-containing ISCU subunit bind to the cysteine desulfurase complex. Component of the mitochondrial core iron-sulfur cluster (ISC) complex composed of NFS1, LYRM4, NDUFAB1, ISCU, FXN, and FDX2; this complex is a heterohexamer containing two copies of each monomer. Interacts (D-state) with NFS1 (homodimer form); each monomer interacts with the C-terminal regions of each NFS1 monomer. Interacts (monomer form) with FXN (via ferrous form); the interaction is possible when both are bound to the dimeric form of the cysteine desulfurase complex (NFS1:LYRM4) and enhances FXN interaction to the dimeric form of the cysteine desulfurase complex (NFS1:LYRM4). Interacts with GLRX5. Interacts (D-state) with HSPA9. Interacts (S-state) with HSCB; this interaction stimulates the ATPase activity of HSPA9. Component of a complex composed of FXN, NFS1, LYRM4 and ISCU. Cysteine persulfide is reduced by thiol-containing molecules such as glutathione and L-cysteine. Post-translationally, phosphorylation at Ser-15 is required for ISCU protein stabilization in the cytosol, whereas dephosphorylation of Ser-15, due to the inhibition of mTORC1 (mammalian target of rapamycin complex 1) complex, leads to degradation of the precursor form and ultimately to a decrease in the mitochondrial mature form.

It localises to the mitochondrion. Its function is as follows. Mitochondrial scaffold protein, of the core iron-sulfur cluster (ISC) assembly complex, that provides the structural architecture on which the [2Fe-2S] clusters are assembled. The core iron-sulfur cluster (ISC) assembly complex is involved in the de novo synthesis of a [2Fe-2S] cluster, the first step of the mitochondrial iron-sulfur protein biogenesis. This process is initiated by the cysteine desulfurase complex (NFS1:LYRM4:NDUFAB1) that produces persulfide which is delivered on the scaffold protein ISCU in a FXN-dependent manner. Then this complex is stabilized by FDX2 which provides reducing equivalents to accomplish the [2Fe-2S] cluster assembly. Finally, the [2Fe-2S] cluster is transferred from ISCU to chaperone proteins, including HSCB, HSPA9 and GLRX5. Exists as two slow interchanging conformational states, a structured (S) and disordered (D) form. May modulate NFS1 desulfurase activity in a zinc-dependent manner. Modulates the interaction between FXN and the cysteine desulfurase complex. This chain is Iron-sulfur cluster assembly enzyme ISCU, found in Mus musculus (Mouse).